Reading from the N-terminus, the 339-residue chain is Probable G-protein coupled receptor 33 (339 aa).

Topologically, residues 1–30 (MDRVNSSGHVISVSPSLTNSTGVPTPAPKA) are extracellular. Residues asparagine 5 and asparagine 19 are each glycosylated (N-linked (GlcNAc...) asparagine). The helical transmembrane segment at 31 to 53 (IIAAALFMSFIVGTISNGLYLWM) threads the bilayer. Topologically, residues 54 to 64 (LKFKMQRTVNT) are cytoplasmic. Residues 65 to 86 (LLFFHLILSYFISTLILPFMAT) form a helical membrane-spanning segment. Topologically, residues 87–103 (SFLQDNHWAFGSVLCKV) are extracellular. Cysteine 101 and cysteine 179 are joined by a disulfide. Residues 104 to 124 (FNSTLSVSMFASVFFLSAISV) form a helical membrane-spanning segment. At 125-143 (DRYHLTLHPVWSQQHRTPR) the chain is on the cytoplasmic side. Residues 144–165 (WASRIALRIWILATILSIPYLV) traverse the membrane as a helical segment. Residues 166–209 (FRETHDDHKGRIKCQNNYIVGTNWESSEHQTLGQWIHAACFGRR) lie on the Extracellular side of the membrane. The helical transmembrane segment at 210–230 (FLLGFLLPFLVIVFCYKRVAT) threads the bilayer. The Cytoplasmic portion of the chain corresponds to 231–246 (KMKDKGLFKSSKPFKV). Residues 247–268 (MLTAVVSFFVCWMPYHVHSGLV) form a helical membrane-spanning segment. At 269–283 (LTKSQPLPSQLTLGL) the chain is on the extracellular side. Residues 284-303 (AVVTISFNTVVSPILYLFTG) traverse the membrane as a helical segment. Over 304–339 (ENFEVFKKSILALFKSTFSDSSATERTQTLNSETEI) the chain is Cytoplasmic.

Belongs to the G-protein coupled receptor 1 family.

The protein localises to the cell membrane. Functionally, orphan receptor; could be a chemoattractant receptor. In Rattus rattus (Black rat), this protein is Probable G-protein coupled receptor 33 (Gpr33).